A 2032-amino-acid polypeptide reads, in one-letter code: MGDDSEWLKLPVDQKCEHKLWKARLSGYEEALKIFQKIKDEKSPEWSKFLGLIKKFVTDSNAVVQLKGLEAALVYVENAHVAGKTTGEVVSGVVSKVFNQPKAKAKELGIEICLMYIEIEKGEAVQEELLKGLDNKNPKIIVACIETLRKALSEFGSKIILLKPIIKVLPKLFESREKAVRDEAKLIAVEIYRWIRDALRPPLQNINSVQLKELEEEWVKLPTSAPRPTRFLRSQQELEAKLEQQQSAGGDAEGGGDDGDEVPQIDAYELLEAVEILSKLPKDFYDKIEAKKWQERKEALESVEVLIKNPKLEAGDYADLVKALKKVVGKDTNVMLVALAAKCLTGLAVGLRKKFGQYAGHVVPTILEKFKEKKPQVVQALQEAIDAIFLTTTLQNISEDVLAVMDNKNPTIKQQTSLFIARSFRHCTASTLPKSLLKPFCAALLKHINDSAPEVRDAAFEALGTALKVVGEKAVNPFLADVDKLKLDKIKECSEKVELIHGKKAGLAADKKEFKPLPGRTAASGAAGDKDTKDISAPKPGPLKKAPAAKAGGPPKKGKPAAPGGAGNTGTKNKKGLETKEIVEPELSIEVCEEKASAVLPPTCIQLLDSSNWKERLACMEEFQKAVELMDRTEMPCQALVRMLAKKPGWKETNFQVMQMKLHIVALIAQKGNFSKTSAQVVLDGLVDKIGDVKCGNNAKEAMTAIAEACMLPWTAEQVVSMAFSQKNPKNQSETLNWLSNAIKEFGFSGLNVKAFISNVKTALAATNPAVRTAAITLLGVMYLYVGPSLRMFFEDEKPALLSQIDAEFEKMQGQSPPAPTRGISKHSTSGTDEGEDGDEPDDGSNDVVDLLPRTEISDKITSELVSKIGDKNWKIRKEGLDEVAGIINDAKFIQPNIGELPTALKGRLNDSNKILVQQTLNILQQLAVAMGPNIKQHVKNLGIPIITVLGDSKNNVRAAALATVNAWAEQTGMKEWLEGEDLSEELKKENPFLRQELLGWLAEKLPTLRSTPTDLILCVPHLYSCLEDRNGDVRKKAQDALPFFMMHLGYEKMAKATGKLKPTSKDQVLAMLEKAKVNMPAKPAPPTKATSKPMGGSAPAKFQPASAPAEDCISSSTEPKPDPKKAKAPGLSSKAKSAQGKKMPSKTSLKEDEDKSGPIFIVVPNGKEQRMKDEKGLKVLKWNFTTPRDEYIEQLKTQMSSCVAKWLQDEMFHSDFQHHNKALAVMVDHLESEKEGVIGCLDLILKWLTLRFFDTNTSVLMKALEYLKLLFTLLSEEEYHLTENEASSFIPYLVVKVGEPKDVIRKDVRAILNRMCLVYPASKMFPFIMEGTKSKNSKQRAECLEELGCLVESYGMNVCQPTPGKALKEIAVHIGDRDNAVRNAALNTIVTVYNVHGDQVFKLIGNLSEKDMSMLEERIKRSAKRPSAAPIKQVEEKPQRAQNISSNANMLRKGPAEDMSSKLNQARSMSGHPEAAQMVRREFQLDLDEIENDNGTVRCEMPELVQHKLDDIFEPVLIPEPKIRAVSPHFDDMHSNTASTINFIISQVASGDINTSIQALTQIDEVLRQEDKAEAMSGHIDQFLIATFMQLRLIYNTHMADEKLEKDEIIKLYSCIIGNMISLFQIESLAREASTGVLKDLMHGLITLMLDSRIEDLEEGQQVIRSVNLLVVKVLEKSDQTNILSALLVLLQDSLLATASSPKFSELVMKCLWRMVRLLPDTINSINLDRILLDIHIFMKVFPKEKLKQCKSEFPIRTLKTLLHTLCKLKGPKILDHLTMIDNKNESELEAHLCRMMKHSMDQTGSKSDKETEKGASRIDEKSSKAKVNDFLAEIFKKIGSKENTKEGLAELYEYKKKYSDADIEPFLKNSSQFFQSYVERGLRVIEMEREGKGRISTSTGISPQMEVTCVPTPTSTVSSIGNTNGEEVGPSVYLERLKILRQRCGLDNTKQDDRPPLTSLLSKPAVPTVASSTDMLHSKLSQLRESREQHQHSDLDSNQTHSSGTVTSSSSTANIDDLKKRLERIKSSRK.

TOG stretches follow at residues 1 to 223 (MGDD…KLPT) and 268 to 502 (YELL…LIHG). Lys-48 carries the post-translational modification N6-acetyllysine. HEAT repeat units follow at residues 159-197 (IILLKPIIKVLPKLFESREKAVRDEAKLIAVEIYRWIRD), 356-394 (GQYAGHVVPTILEKFKEKKPQVVQALQEAIDAIFLTTTL), and 434-472 (KSLLKPFCAALLKHINDSAPEVRDAAFEALGTALKVVGE). Positions 516-579 (PLPGRTAASG…GTKNKKGLET (64 aa)) are disordered. Positions 543–554 (LKKAPAAKAGGP) are enriched in low complexity. The tract at residues 588-817 (SIEVCEEKAS…EFEKMQGQSP (230 aa)) is TOG 3. One copy of the HEAT 4 repeat lies at 750 to 788 (GLNVKAFISNVKTALAATNPAVRTAAITLLGVMYLYVGP). The tract at residues 811–851 (KMQGQSPPAPTRGISKHSTSGTDEGEDGDEPDDGSNDVVDL) is disordered. A phosphoserine mark is found at Ser-816 and Ser-845. A compositionally biased stretch (acidic residues) spans 833 to 845 (DEGEDGDEPDDGS). 2 TOG regions span residues 853–1081 (PRTE…VNMP) and 1193–1428 (IEQL…KRPS). HEAT repeat units follow at residues 855-893 (TEISDKITSELVSKIGDKNWKIRKEGLDEVAGIINDAKF), 936-974 (KQHVKNLGIPIITVLGDSKNNVRAAALATVNAWAEQTGM), and 1013-1051 (PTDLILCVPHLYSCLEDRNGDVRKKAQDALPFFMMHLGY). Positions 1077 to 1160 (KVNMPAKPAP…KEDEDKSGPI (84 aa)) are disordered. HEAT repeat units follow at residues 1284–1322 (ENEASSFIPYLVVKVGEPKDVIRKDVRAILNRMCLVYPA), 1324–1357 (KMFPFIMEGTKSKNSKQRAECLEELGCLVESYGM), and 1361–1399 (QPTPGKALKEIAVHIGDRDNAVRNAALNTIVTVYNVHGD). The segment at 1422 to 1443 (RSAKRPSAAPIKQVEEKPQRAQ) is disordered. Residue Ser-1469 is modified to Phosphoserine. The segment at 1801-1822 (SMDQTGSKSDKETEKGASRIDE) is disordered. Over residues 1808 to 1822 (KSDKETEKGASRIDE) the composition is skewed to basic and acidic residues. Ser-1861 bears the Phosphoserine mark. The interval 1932–1957 (PSVYLERLKILRQRCGLDNTKQDDRP) is interaction with TACC3. Positions 1949 to 2032 (DNTKQDDRPP…RLERIKSSRK (84 aa)) are disordered. Over residues 1971-1983 (VASSTDMLHSKLS) the composition is skewed to polar residues. A compositionally biased stretch (basic and acidic residues) spans 1984-1997 (QLRESREQHQHSDL). Positions 2002 to 2014 (THSSGTVTSSSST) are enriched in low complexity. Over residues 2018 to 2032 (DDLKKRLERIKSSRK) the composition is skewed to basic and acidic residues.

It belongs to the TOG/XMAP215 family. In terms of assembly, interacts with TACC1. Interacts with SLAIN2 and SLAIN1. Interacts with HNRNPA2B1. Interacts with TACC3 independently of clathrin. Interacts with TACC3 and clathrin forming the TACC3/ch-TOG/clathrin complex located at spindle inter-microtubules bridges. Interacts with NDC80; indicative for an association with the NDC80 complex. In terms of tissue distribution, overexpressed in hepatomas and colonic tumors. Also expressed in skeletal muscle, brain, heart, placenta, lung, liver, kidney and pancreas. Expression is elevated in the brain; highly expressed in the Purkinje cell bodies of the cerebellum.

It is found in the cytoplasm. It localises to the cytoskeleton. Its subcellular location is the microtubule organizing center. The protein resides in the centrosome. The protein localises to the spindle pole. It is found in the spindle. It localises to the chromosome. Its subcellular location is the centromere. The protein resides in the kinetochore. Binds to the plus end of microtubules and regulates microtubule dynamics and microtubule organization. Acts as a processive microtubule polymerase. Promotes cytoplasmic microtubule nucleation and elongation. Plays a major role in organizing spindle poles. In spindle formation protects kinetochore microtubules from depolymerization by KIF2C and has an essential role in centrosomal microtubule assembly independently of KIF2C activity. Contributes to centrosome integrity. Acts as a component of the TACC3/ch-TOG/clathrin complex proposed to contribute to stabilization of kinetochore fibers of the mitotic spindle by acting as inter-microtubule bridge. The TACC3/ch-TOG/clathrin complex is required for the maintenance of kinetochore fiber tension. Enhances the strength of NDC80 complex-mediated kinetochore-tip microtubule attachments. This chain is Cytoskeleton-associated protein 5 (CKAP5), found in Homo sapiens (Human).